Consider the following 364-residue polypeptide: MNDVHNFNAGPAALPKQALERAQKELVNFDGTGMSVMELSHRGDTYDRIHTHAIKKIRKLLDVPDDYHILFLQGGASLQFPMVPMNFLDSQATYILTGAWSEKALAEAKHFGKTVIGASGKDGNYKQIPALNQISEHAQDSYVHMTSNNTIYGTQWHAFPNTKAPLVCDMSSDIFSRRIPVNQFGLIYAGAQKNLGPSGVTLVLIQDAFLQRAKSGLPAMLSYDTFVKSNSLYNTPPVFSIYMLGLVLDWLEESGGLTEIENRNKAKAQLLYEAIDESDGFYIGHAAQDSRSNMNVTFTLANDALTSVFLQEAKEAGFVGLNGHRSVGGLRASIYNAVPYASCEALVDFMKQFKNKHAEKGATV.

Arg42 contacts L-glutamate. Pyridoxal 5'-phosphate-binding positions include 76 to 77 (AS), Trp100, Thr150, Asp169, and Gln192. Lys193 carries the post-translational modification N6-(pyridoxal phosphate)lysine. 234 to 235 (NT) is a pyridoxal 5'-phosphate binding site.

It belongs to the class-V pyridoxal-phosphate-dependent aminotransferase family. SerC subfamily. As to quaternary structure, homodimer. The cofactor is pyridoxal 5'-phosphate.

Its subcellular location is the cytoplasm. The catalysed reaction is O-phospho-L-serine + 2-oxoglutarate = 3-phosphooxypyruvate + L-glutamate. It catalyses the reaction 4-(phosphooxy)-L-threonine + 2-oxoglutarate = (R)-3-hydroxy-2-oxo-4-phosphooxybutanoate + L-glutamate. It functions in the pathway amino-acid biosynthesis; L-serine biosynthesis; L-serine from 3-phospho-D-glycerate: step 2/3. Catalyzes the reversible conversion of 3-phosphohydroxypyruvate to phosphoserine and of 3-hydroxy-2-oxo-4-phosphonooxybutanoate to phosphohydroxythreonine. This Shouchella clausii (strain KSM-K16) (Alkalihalobacillus clausii) protein is Phosphoserine aminotransferase.